The sequence spans 185 residues: UPF0397 protein LBA0922 (185 aa).

The next 5 helical transmembrane spans lie at 11 to 31 (VVAIGIGSAIYVILARFTSIP), 45 to 65 (FLAFFASIYGATVGFSVGFIG), 72 to 92 (IMYGQTWWSWVLATGILGWII), 111 to 131 (IILFNIVQIIANILAWIVVAP), and 146 to 166 (FVQGISATISNGISILIIGTI).

It belongs to the UPF0397 family.

The protein resides in the cell membrane. The protein is UPF0397 protein LBA0922 of Lactobacillus acidophilus (strain ATCC 700396 / NCK56 / N2 / NCFM).